The sequence spans 210 residues: UPF0173 protein PF0020 (210 aa).

Belongs to the UPF0173 family.

In Pyrococcus furiosus (strain ATCC 43587 / DSM 3638 / JCM 8422 / Vc1), this protein is UPF0173 protein PF0020.